Reading from the N-terminus, the 426-residue chain is Serine hydroxymethyltransferase (426 aa).

Residues leucine 121 and 125–127 (GHL) contribute to the (6S)-5,6,7,8-tetrahydrofolate site. Lysine 230 is subject to N6-(pyridoxal phosphate)lysine. 354–356 (SPF) lines the (6S)-5,6,7,8-tetrahydrofolate pocket.

This sequence belongs to the SHMT family. As to quaternary structure, homodimer. Pyridoxal 5'-phosphate is required as a cofactor.

The protein resides in the cytoplasm. The enzyme catalyses (6R)-5,10-methylene-5,6,7,8-tetrahydrofolate + glycine + H2O = (6S)-5,6,7,8-tetrahydrofolate + L-serine. The protein operates within one-carbon metabolism; tetrahydrofolate interconversion. It participates in amino-acid biosynthesis; glycine biosynthesis; glycine from L-serine: step 1/1. In terms of biological role, catalyzes the reversible interconversion of serine and glycine with tetrahydrofolate (THF) serving as the one-carbon carrier. This reaction serves as the major source of one-carbon groups required for the biosynthesis of purines, thymidylate, methionine, and other important biomolecules. Also exhibits THF-independent aldolase activity toward beta-hydroxyamino acids, producing glycine and aldehydes, via a retro-aldol mechanism. The chain is Serine hydroxymethyltransferase from Gloeobacter violaceus (strain ATCC 29082 / PCC 7421).